The following is a 148-amino-acid chain: Large ribosomal subunit protein uL15 (148 aa).

The segment covering 1–11 (MSEPIKLHDLR) has biased composition (basic and acidic residues). Residues 1–52 (MSEPIKLHDLRPAAGSNKAKTRVGRGEASKGKTAGRGTKGTKARKQVSAAFE) form a disordered region.

This sequence belongs to the universal ribosomal protein uL15 family. In terms of assembly, part of the 50S ribosomal subunit.

Functionally, binds to the 23S rRNA. This Corynebacterium glutamicum (strain R) protein is Large ribosomal subunit protein uL15.